A 257-amino-acid polypeptide reads, in one-letter code: Hydroxyacylglutathione hydrolase (257 aa).

Zn(2+)-binding residues include His-54, His-56, Asp-58, His-59, His-113, Asp-137, and His-175.

This sequence belongs to the metallo-beta-lactamase superfamily. Glyoxalase II family. In terms of assembly, monomer. The cofactor is Zn(2+).

The catalysed reaction is an S-(2-hydroxyacyl)glutathione + H2O = a 2-hydroxy carboxylate + glutathione + H(+). It functions in the pathway secondary metabolite metabolism; methylglyoxal degradation; (R)-lactate from methylglyoxal: step 2/2. In terms of biological role, thiolesterase that catalyzes the hydrolysis of S-D-lactoyl-glutathione to form glutathione and D-lactic acid. This is Hydroxyacylglutathione hydrolase from Acaryochloris marina (strain MBIC 11017).